Reading from the N-terminus, the 662-residue chain is Pro-neuregulin-1, membrane-bound isoform (662 aa).

A propeptide spanning residues 1 to 13 (MSERKEGRGKGKG) is cleaved from the precursor. The tract at residues 1 to 52 (MSERKEGRGKGKGKKKDRGSRGKPGPAEGDPSPALPPRLKEMKSQESAAGSK) is disordered. At 14–265 (KKKDRGSRGK…SKAEELYQKR (252 aa)) the chain is on the extracellular side. The Ig-like C2-type domain maps to 37 to 128 (PRLKEMKSQE…GNDSASANIT (92 aa)). Cys57 and Cys112 form a disulfide bridge. N-linked (GlcNAc...) asparagine glycosylation is found at Asn120, Asn126, and Asn164. Residues 178–222 (HLIKCAEKEKTFCVNGGECFTVKDLSNPSRYLCKCPNEFTGDRCQ) enclose the EGF-like domain. 3 disulfides stabilise this stretch: Cys182/Cys196, Cys190/Cys210, and Cys212/Cys221. A helical transmembrane segment spans residues 266 to 288 (VLTITGICIALLVVGIMCVVAYC). The Cytoplasmic portion of the chain corresponds to 289–662 (KTKKQRQKLH…VIANQDPIAV (374 aa)). The segment covering 358–373 (SHYTSTAHHSTTVTQT) has biased composition (low complexity). 3 disordered regions span residues 358–383 (SHYT…NGHT), 398–480 (SVEN…PVSS), and 547–610 (YETT…DTPF). Residues 374–383 (PSHSWSNGHT) are compositionally biased toward polar residues. Gly residues predominate over residues 410-420 (GPRGRLHGLGG). A compositionally biased stretch (basic and acidic residues) spans 425–445 (SFLRHARETPDSYRDSPHSER). Over residues 564–574 (TNSRRAKRTKP) the composition is skewed to basic residues. A compositionally biased stretch (low complexity) spans 585 to 596 (DSNTSSVSSNSE).

It belongs to the neuregulin family. The cytoplasmic domain interacts with the LIM domain region of LIMK1. Forms a ternary complex with ERBB3 and ITGAV:ITGB3 or ITGA6:ITGB4. Interacts with NRDC and BACE1. Proteolytic cleavage close to the plasma membrane on the external face leads to the release of the soluble growth factor form. Post-translationally, N- and O-glycosylated. Extensive glycosylation precedes the proteolytic cleavage. Widely expressed. Most tissues contain isoform alpha2A and isoform alpha2B. Isoform Alpha2 and isoform beta2 are the predominant forms in mesenchymal and non-neuronal organs. Isoform Beta1 is enriched in brain and spinal cord, but not in muscle and heart. Isoform Alpha2C is highly expressed in spinal cord, moderately in lung, brain, ovary, and stomach, in low amounts in the kidney, skin and heart and not detected in the liver, spleen, and placenta.

The protein resides in the cell membrane. The protein localises to the secreted. Direct ligand for ERBB3 and ERBB4 tyrosine kinase receptors. Concomitantly recruits ERBB1 and ERBB2 coreceptors, resulting in ligand-stimulated tyrosine phosphorylation and activation of the ERBB receptors. The multiple isoforms perform diverse functions such as inducing growth and differentiation of epithelial, glial, neuronal, and skeletal muscle cells; inducing expression of acetylcholine receptor in synaptic vesicles during the formation of the neuromuscular junction; stimulating lobuloalveolar budding and milk production in the mammary gland and inducing differentiation of mammary tumor cells; stimulating Schwann cell proliferation; implication in the development of the myocardium such as trabeculation of the developing heart. Binds to ERBB4 and ERBB3. Acts as a ligand for integrins and binds (via EGF domain) to integrins ITGAV:ITGB3 or ITGA6:ITGB4. Its binding to integrins and subsequent ternary complex formation with integrins and ERRB3 are essential for NRG1-ERBB signaling. Induces the phosphorylation and activation of MAPK3/ERK1, MAPK1/ERK2 and AKT1, and ligand-dependent ERBB4 endocytosis is essential for the NRG1-mediated activation of these kinases in neurons. This Rattus norvegicus (Rat) protein is Pro-neuregulin-1, membrane-bound isoform (Nrg1).